A 281-amino-acid polypeptide reads, in one-letter code: Glutamate racemase (281 aa).

Residues 10–11 (DS) and 42–43 (YG) each bind substrate. The active-site Proton donor/acceptor is C74. Position 75-76 (75-76 (NT)) interacts with substrate. C190 functions as the Proton donor/acceptor in the catalytic mechanism. 191 to 192 (TH) provides a ligand contact to substrate.

This sequence belongs to the aspartate/glutamate racemases family.

It carries out the reaction L-glutamate = D-glutamate. It functions in the pathway cell wall biogenesis; peptidoglycan biosynthesis. In terms of biological role, provides the (R)-glutamate required for cell wall biosynthesis. The protein is Glutamate racemase of Oenococcus oeni (strain ATCC BAA-331 / PSU-1).